A 406-amino-acid chain; its full sequence is Cysteine desulfurase (406 aa).

Position 226 is an N6-(pyridoxal phosphate)lysine (Lys226). The Cysteine persulfide intermediate role is filled by Cys364.

This sequence belongs to the class-V pyridoxal-phosphate-dependent aminotransferase family. Csd subfamily. Homodimer. Interacts with SufE and the SufBCD complex composed of SufB, SufC and SufD. The interaction with SufE is required to mediate the direct transfer of the sulfur atom from the S-sulfanylcysteine. Requires pyridoxal 5'-phosphate as cofactor.

The protein localises to the cytoplasm. It carries out the reaction (sulfur carrier)-H + L-cysteine = (sulfur carrier)-SH + L-alanine. The enzyme catalyses L-selenocysteine + AH2 = hydrogenselenide + L-alanine + A + H(+). Its pathway is cofactor biosynthesis; iron-sulfur cluster biosynthesis. In terms of biological role, cysteine desulfurases mobilize the sulfur from L-cysteine to yield L-alanine, an essential step in sulfur metabolism for biosynthesis of a variety of sulfur-containing biomolecules. Component of the suf operon, which is activated and required under specific conditions such as oxidative stress and iron limitation. Acts as a potent selenocysteine lyase in vitro, that mobilizes selenium from L-selenocysteine. Selenocysteine lyase activity is however unsure in vivo. The sequence is that of Cysteine desulfurase from Salmonella gallinarum (strain 287/91 / NCTC 13346).